The following is a 945-amino-acid chain: Argonaute protein wago-1 (945 aa).

Pro residues predominate over residues 1–20 (MSPHPPQPHPPMPPMPPVTA). The tract at residues 1–41 (MSPHPPQPHPPMPPMPPVTAPPGAMTPMPPVPADAQKLHQS) is disordered. Positions 322 to 432 (TVIQKLFDIT…FPAELMTVSR (111 aa)) constitute a PAZ domain. In terms of domain architecture, Piwi spans 636 to 899 (VKDGKRLTLE…PLYVANEYAK (264 aa)).

It belongs to the Argonaute family. WAGO subfamily. Interacts with rde-12. Interacts with znfx-1. Enriched in sperm and oocytes.

The protein localises to the cytoplasmic granule. Argonaute protein which is involved in the endogenous small interfering RNA (endo-siRNA) pathway. Interacts with secondary 22G-RNAs, which are RNA-dependent RNA polymerase-derived endo-siRNAs, typically 22 nucleotides in length with a 5'guanosine residue. In the germline, functions in a genome surveillance system to silence transposons and aberrant transcripts. The polypeptide is Argonaute protein wago-1 (Caenorhabditis elegans).